The chain runs to 158 residues: UPF0262 protein R00612 (158 aa).

It belongs to the UPF0262 family.

In Rhizobium meliloti (strain 1021) (Ensifer meliloti), this protein is UPF0262 protein R00612.